Consider the following 154-residue polypeptide: Transcriptional repressor NrdR (154 aa).

A zinc finger spans residues 3 to 34; it reads CPFCGAEDTAVADTRLNDEADVVRRRRKCNAC. Positions 49–139 constitute an ATP-cone domain; the sequence is PQVVKKNGLR…VYRNFEDVDA (91 aa).

This sequence belongs to the NrdR family. Zn(2+) serves as cofactor.

Its function is as follows. Negatively regulates transcription of bacterial ribonucleotide reductase nrd genes and operons by binding to NrdR-boxes. In Dechloromonas aromatica (strain RCB), this protein is Transcriptional repressor NrdR.